The sequence spans 790 residues: Solute carrier family 26 member 9 (790 aa).

At 1–70 (MNQPRPRYVV…WLPKYKIKDY (70 aa)) the chain is on the cytoplasmic side. Residues 71 to 96 (IIPDLLGGLSGGCIQVPQGMAFALLA) traverse the membrane as a helical segment. Residues 97-100 (NLPA) lie on the Extracellular side of the membrane. A helical transmembrane segment spans residues 101 to 109 (VNGLYSSFF). Residues 110–129 (PLLTYFFLGGIHQMVPGTFA) are Cytoplasmic-facing. The helical transmembrane segment at 130-142 (VISILVGNICLQL) threads the bilayer. The Extracellular segment spans residues 143–162 (APESKFQIFNNVTNETYVDT). The chain crosses the membrane as a helical span at residues 163-191 (AAMEAERLHVSATLACLTAVIQMALGFMQ). The Cytoplasmic portion of the chain corresponds to 192 to 201 (FGFVAIYLSE). Residues 202-224 (SFIRGFMTAAGLQILISVLKYIF) form a helical membrane-spanning segment. Over 225–237 (GLTIPSYTGPGSI) the chain is Extracellular. Residues 238–246 (VFTFIDICK) constitute an intramembrane region (helical). The Extracellular portion of the chain corresponds to 247-254 (NLPHTNIA). A helical membrane pass occupies residues 255-275 (SLIFALVSGVFLVLVKELNAR). The Cytoplasmic segment spans residues 276–286 (YMHKIHFPIPT). Residues 287-299 (EMIVVVVATAISG) form a helical membrane-spanning segment. Topologically, residues 300–334 (SCKMPKKYHMQIVGEIRQGFPTPVAPMVSQWKGMV) are extracellular. Residues 335 to 358 (GTAFSLAIVGYVINLAMGRTLASK) form a helical membrane-spanning segment. Residues 359–365 (HGYDVDS) lie on the Cytoplasmic side of the membrane. The chain crosses the membrane as a helical span at residues 366-379 (NQEMIALGCSNFFG). At 380 to 390 (SFFKIHVICCA) the chain is on the extracellular side. The helical transmembrane segment at 391-400 (LSVTLAVDGA) threads the bilayer. The Cytoplasmic segment spans residues 401–405 (GGKSQ). A helical membrane pass occupies residues 406–419 (VASLCVSLVVMITM). The Extracellular portion of the chain corresponds to 420–431 (LVLGSYLYPLPK). Residues 432 to 457 (AVLGALIAVNLKNSLKQLTDPYYLWR) traverse the membrane as a helical segment. Topologically, residues 458–461 (KSKL) are cytoplasmic. The helical transmembrane segment at 462–476 (DCCVWVVSFLSSFFL) threads the bilayer. Residues 477-479 (SLP) are Extracellular-facing. Residues 480–498 (YGVAVGVAFSILVVIFQTQ) traverse the membrane as a helical segment. The Cytoplasmic segment spans residues 499 to 790 (FRNGSTLAQV…MFHTETLTAL (292 aa)). The STAS domain occupies 519–737 (TYNRAQEIAG…PSIHDAVLFA (219 aa)).

It belongs to the SLC26A/SulP transporter (TC 2.A.53) family. In terms of assembly, homodimer. As to expression, expressed in stomach and trachea. Abundantly expressed in the apical domain of the surface epithelial cells and the deep cells in the gastric gland. Also expressed in heart, brain, lung and liver.

It is found in the cell membrane. It localises to the endomembrane system. It carries out the reaction chloride(in) = chloride(out). The enzyme catalyses hydrogencarbonate(in) + chloride(out) = hydrogencarbonate(out) + chloride(in). With respect to regulation, inhibited by ammonium and thiosulfate. Ion transporter that can act both as an ion channel and anion exchanger. Mainly acts as a chloride channel, which mediate uncoupled chloride anion transport in an alternate-access mechanism where a saturable binding site is alternately exposed to either one or the other side of the membrane. Also acts as a DIDS- and thiosulfate- sensitive anion exchanger the exchange of chloride for bicarbonate ions across the cell membrane. The protein is Solute carrier family 26 member 9 of Mus musculus (Mouse).